A 204-amino-acid chain; its full sequence is Peptidyl-tRNA hydrolase (204 aa).

Tyr-14 serves as a coordination point for tRNA. His-19 acts as the Proton acceptor in catalysis. Tyr-64, Asn-66, and Asn-112 together coordinate tRNA.

The protein belongs to the PTH family. As to quaternary structure, monomer.

Its subcellular location is the cytoplasm. The catalysed reaction is an N-acyl-L-alpha-aminoacyl-tRNA + H2O = an N-acyl-L-amino acid + a tRNA + H(+). Its function is as follows. Hydrolyzes ribosome-free peptidyl-tRNAs (with 1 or more amino acids incorporated), which drop off the ribosome during protein synthesis, or as a result of ribosome stalling. Functionally, catalyzes the release of premature peptidyl moieties from peptidyl-tRNA molecules trapped in stalled 50S ribosomal subunits, and thus maintains levels of free tRNAs and 50S ribosomes. This is Peptidyl-tRNA hydrolase from Nitrobacter hamburgensis (strain DSM 10229 / NCIMB 13809 / X14).